A 563-amino-acid polypeptide reads, in one-letter code: Putative inactive polypeptide N-acetylgalactosaminyltransferase 12 (563 aa).

Topologically, residues 1–6 are cytoplasmic; sequence MEVFAS. A helical; Signal-anchor for type II membrane protein membrane pass occupies residues 7–29; sequence VLNCCFKYIVLPVWIFIVLLLLH. Residues 30–563 lie on the Lumenal side of the membrane; the sequence is RDLSSWDGLM…SVMQSANILV (534 aa). N-linked (GlcNAc...) asparagine glycosylation occurs at Asn50. A disulfide bond links Cys97 and Cys334. The catalytic subdomain A stretch occupies residues 109 to 225; it reads MKPASIIMIF…NGWLSPLLDT (117 aa). A catalytic subdomain B region spans residues 280–342; sequence PYEVAAVRTS…PCSRVGHLQP (63 aa). 2 N-linked (GlcNAc...) asparagine glycosylation sites follow: Asn389 and Asn428. A Ricin B-type lectin domain is found at 433–549; that stretch reads ASGHVKTLEF…ANGKQRWILD (117 aa). An intrachain disulfide couples Cys446 to Cys461. Asn464 and Asn469 each carry an N-linked (GlcNAc...) asparagine glycan. Disulfide bonds link Cys485/Cys499 and Cys523/Cys537. Asn552 carries N-linked (GlcNAc...) asparagine glycosylation.

It belongs to the glycosyltransferase 2 family. GalNAc-T subfamily.

It localises to the golgi apparatus membrane. In terms of biological role, probable inactive glycosyltransferase. The polypeptide is Putative inactive polypeptide N-acetylgalactosaminyltransferase 12 (pgant12) (Drosophila melanogaster (Fruit fly)).